A 469-amino-acid polypeptide reads, in one-letter code: Arginine biosynthesis bifunctional protein ArgJ, mitochondrial (469 aa).

Substrate is bound by residues Thr-199, Lys-228, Thr-239, Glu-325, Asn-464, and Thr-469. The active-site Nucleophile is the Thr-239.

The protein belongs to the ArgJ family. As to quaternary structure, heterodimer of an alpha and a beta chain. In terms of processing, the alpha and beta chains are autoproteolytically processed from a single precursor protein within the mitochondrion.

It localises to the mitochondrion matrix. It catalyses the reaction N(2)-acetyl-L-ornithine + L-glutamate = N-acetyl-L-glutamate + L-ornithine. It carries out the reaction L-glutamate + acetyl-CoA = N-acetyl-L-glutamate + CoA + H(+). The protein operates within amino-acid biosynthesis; L-arginine biosynthesis; L-ornithine and N-acetyl-L-glutamate from L-glutamate and N(2)-acetyl-L-ornithine (cyclic): step 1/1. Its pathway is amino-acid biosynthesis; L-arginine biosynthesis; N(2)-acetyl-L-ornithine from L-glutamate: step 1/4. Its function is as follows. Catalyzes two activities which are involved in the cyclic version of arginine biosynthesis: the synthesis of acetylglutamate from glutamate and acetyl-CoA, and of ornithine by transacetylation between acetylornithine and glutamate. This is Arginine biosynthesis bifunctional protein ArgJ, mitochondrial from Sordaria macrospora (strain ATCC MYA-333 / DSM 997 / K(L3346) / K-hell).